The sequence spans 1322 residues: WD repeat-containing protein 17 (1322 aa).

5 WD repeats span residues 81 to 121 (EHKK…VIAK), 123 to 164 (DSTK…SGVI), 171 to 211 (SFLS…QKHV), 221 to 261 (DEED…CITT), and 266 to 307 (SAAA…PIDN). The disordered stretch occupies residues 328 to 352 (KFSVQSPTKNHYTSSTSEAVPPPTL). Over residues 330 to 345 (SVQSPTKNHYTSSTSE) the composition is skewed to polar residues. WD repeat units follow at residues 391–431 (GHVE…AVYT), 434–474 (GNEG…IIQR), 478–518 (HGTN…LHKY), 519–559 (KHPA…DQPL), 564–604 (GHTA…CINI), 607–647 (GHTA…CVDT), and 650–690 (DHGA…TPVQ).

This is WD repeat-containing protein 17 (WDR17) from Homo sapiens (Human).